Here is a 486-residue protein sequence, read N- to C-terminus: Cephamycin export protein CmcT (486 aa).

Transmembrane regions (helical) follow at residues 24 to 44 (VLACTAHFLVVFDTSVITVAL), 56 to 76 (ASLQWVVNSYTLAFAGLLLFG), 88 to 108 (VFLGGLAVFTLTSLIGGLATS), 121 to 141 (AGAAVLAPLAVTMLTTSFAEG), 153 to 173 (AVALVGGASGNLLGGVFTEFL), 178 to 198 (VLLVNVPIGIPVLFLAARVLA), 210 to 230 (LDLPGAVLATAGLTLLTLGVS), 241 to 261 (AVAVPLAGGLLALLAFVVVEA), 284 to 304 (LAMLLAGASQVPVWFFLTLSM), 317 to 337 (LGFVPHALVMLVVGLRVVPWL), 345 to 365 (VLIAAGAAIGALGFWWQSLLT), 369 to 389 (AYLGGILGPAVLISIGGGLVG), 418 to 438 (FGGAFGLAVLLTVTGSGTSGS), and 450 to 470 (FVGIAVFMLAIAVLTPVLPAL).

Belongs to the major facilitator superfamily.

It is found in the cell membrane. Involved in cephamycin export. This Amycolatopsis lactamdurans (Nocardia lactamdurans) protein is Cephamycin export protein CmcT (cmcT).